The sequence spans 197 residues: Putative sulfur carrier protein aq_1421 (197 aa).

Cysteine 17 functions as the Cysteine persulfide intermediate in the catalytic mechanism.

Belongs to the sulfur carrier protein TusA family.

The chain is Putative sulfur carrier protein aq_1421 from Aquifex aeolicus (strain VF5).